The chain runs to 399 residues: Elongation factor Tu (399 aa).

Residues 10–209 (KPHVNIGTIG…EVDAYIPTPV (200 aa)) form the tr-type G domain. A G1 region spans residues 19-26 (GHVDHGKT). GTP is bound at residue 19 to 26 (GHVDHGKT). Threonine 26 provides a ligand contact to Mg(2+). The tract at residues 60–64 (GITIA) is G2. The tract at residues 81–84 (DCPG) is G3. Residues 81–85 (DCPGH) and 136–139 (NKQD) each bind GTP. The tract at residues 136 to 139 (NKQD) is G4. Residues 174–176 (SAL) form a G5 region.

This sequence belongs to the TRAFAC class translation factor GTPase superfamily. Classic translation factor GTPase family. EF-Tu/EF-1A subfamily. As to quaternary structure, monomer.

The protein localises to the cytoplasm. The enzyme catalyses GTP + H2O = GDP + phosphate + H(+). Its function is as follows. GTP hydrolase that promotes the GTP-dependent binding of aminoacyl-tRNA to the A-site of ribosomes during protein biosynthesis. The protein is Elongation factor Tu of Helicobacter acinonychis (strain Sheeba).